Consider the following 712-residue polypeptide: Ribosomal RNA large subunit methyltransferase K/L (712 aa).

Residues 43 to 154 enclose the THUMP domain; sequence TAYRCCLWTR…GEKGVLGLDM (112 aa).

It belongs to the methyltransferase superfamily. RlmKL family.

It is found in the cytoplasm. The catalysed reaction is guanosine(2445) in 23S rRNA + S-adenosyl-L-methionine = N(2)-methylguanosine(2445) in 23S rRNA + S-adenosyl-L-homocysteine + H(+). It catalyses the reaction guanosine(2069) in 23S rRNA + S-adenosyl-L-methionine = N(2)-methylguanosine(2069) in 23S rRNA + S-adenosyl-L-homocysteine + H(+). Specifically methylates the guanine in position 2445 (m2G2445) and the guanine in position 2069 (m7G2069) of 23S rRNA. This chain is Ribosomal RNA large subunit methyltransferase K/L, found in Photobacterium profundum (strain SS9).